The primary structure comprises 948 residues: ATPase 2, plasma membrane-type (948 aa).

S2 carries the post-translational modification N-acetylserine. At 2-61 (SSLEDIKNETVDLEKIPIEEVFQQLKCSREGLTTQEGEDRIQIFGPNKLEEKKESKLLKF) the chain is on the cytoplasmic side. Residues 62–81 (LGFMWNPLSWVMEMAAIMAI) traverse the membrane as a helical segment. Residues 82–93 (ALANGDGRPPDW) are Extracellular-facing. A helical membrane pass occupies residues 94–114 (QDFVGIICLLVINSTISFIEE). The Cytoplasmic segment spans residues 115–243 (NNAGNAAAAL…GHFQKVLTAI (129 aa)). The chain crosses the membrane as a helical span at residues 244-264 (GNFCICSIAIGMVIEIIVMYP). At 265–273 (IQRRKYRDG) the chain is on the extracellular side. The helical transmembrane segment at 274 to 291 (IDNLLVLLIGGIPIAMPT) threads the bilayer. Over 292–643 (VLSVTMAIGS…TSRAIFQRMK (352 aa)) the chain is Cytoplasmic. D329 serves as the catalytic 4-aspartylphosphate intermediate. Residues D588 and D592 each contribute to the Mg(2+) site. The helical transmembrane segment at 644–665 (NYTIYAVSITIRIVFGFMLIAL) threads the bilayer. Residues 666–670 (IWEFD) lie on the Extracellular side of the membrane. Residues 671 to 693 (FSAFMVLIIAILNDGTIMTISKD) traverse the membrane as a helical segment. Residues 694-709 (RVKPSPTPDSWKLKEI) lie on the Cytoplasmic side of the membrane. Residues 710–730 (FATGVVLGGYQAIMTVIFFWA) traverse the membrane as a helical segment. Topologically, residues 731 to 751 (AHKTDFFSDTFGVRSIRDNNH) are extracellular. The chain crosses the membrane as a helical span at residues 752–772 (ELMGAVYLQVSIISQALIFVT). Residues 773 to 784 (RSRSWSFVERPG) lie on the Cytoplasmic side of the membrane. A helical transmembrane segment spans residues 785-805 (ALLMIAFLIAQLIATLIAVYA). Residues 806–813 (NWEFAKIR) lie on the Extracellular side of the membrane. The chain crosses the membrane as a helical span at residues 814-834 (GIGWGWAGVIWLYSIVTYFPL). The Cytoplasmic segment spans residues 835–948 (DVFKFAIRYI…DIETPSHYTV (114 aa)). T881 is modified (phosphothreonine). The residue at position 899 (S899) is a Phosphoserine. Residue S931 is modified to Phosphoserine; by CIPK11. Positions 946-948 (YTV) are interaction with 14-3-3 proteins. Position 947 is a phosphothreonine (T947).

It belongs to the cation transport ATPase (P-type) (TC 3.A.3) family. Type IIIA subfamily. As to quaternary structure, binds to 14-3-3 proteins. The binding is induced by phosphorylation of Thr-947 and it activates the H(+)-ATPase. Interacts (via the R-domain) with PSY1R (via C-terminus). Part of a functional complex containing PSKR1, BAK1, CNGC17, and AHA. Interacts with CNGC17 and PSKR1. Interacts with PP2C67/PP2C-D1 at the plasma membrane. Interacts with AHA1. Phosphorylated, probably by PHOT1 and PHOT2, at C-terminal Thr-947 in guard cells in response to blue light to induce stomatal opening. In terms of processing, phosphorylation at Thr-881 by PSY1R. This phosphorylation activates proton pumping. Decreased phosphorylation in response to flg22 elicitation. Post-translationally, phosphorylation at Ser-899 is specifically induced by RALF1, thus leading to the inhibition of proton transport. Increased phosphorylation in response to flg22 elicitation. Phosphorylation of Thr-947 induces the binding to 14-3-3 proteins, but phosphorylation of Ser-931 interferes with this binding no matter whether Thr-947 is phosphorylated or not. Decreased phosphorylation in response to flg22 elicitation. Phosphorylation of Thr-947 is enhanced by the presence of brassinolide (BL) via the BRI1-BIN2 pathway and prior the trigger of hypocotyl elongation. Inactivated by PP2C67/PP2C-D1-mediated Thr-947 dephosphorylation; SAUR19 inhibits the action of PP2C67/PP2C-D1 and thus promotes the active phosphorylated form. In terms of processing, abscisic acid induces dephosphorylation of AHA2 in etiolated seedlings, suppressing ATP hydrolysis and hypocotyl elongation. As to expression, higher levels in roots than in shoots. Expressed in epidermal and root cortex cells, in phloem, xylem and root hairs. Detected in cotyledons, leaves, hypocotyls, roots and root hairs. Expressed in guard cells and mesophyll cells.

It localises to the cell membrane. The enzyme catalyses ATP + H2O + H(+)(in) = ADP + phosphate + 2 H(+)(out). Its activity is regulated as follows. Regulated by an auto-inhibitory C-terminal domain that can be displaced by phosphorylation of Thr-947 and the subsequent binding of 14-3-3 proteins. Negatively regulated by PKS5. PKS5 phosphorylates Ser-931, inhibiting interaction with the activating 14-3-3 protein. Positively regulated by PSY1R. PSY1R phosphorylates Thr-881, situated in the auto-inhibitory region I of the C-terminal domain, causing pump activation. Negatively regulated by the secreted peptide RALF. After specific binding to FERONIA, RALF causes phosphorylation at Ser-899, mediating the inhibition of proton transport. Activated by lysophospholipids, without the involvement of phosphorylation of Thr-947. This activation is critically dependent on the single autoinhibitory residue Leu-919. Repressed by PP2C-D phosphatases (e.g. PP2C67/PP2C-D1 and PP2C64/PP2C-D5) which dephosphorylates Thr-947. Triggered by SAUR19 via phosphorylation of the C-terminal autoinhibitory domain (e.g. Thr-947), as a result of the inhibition of PP2C67/PP2C-D1. Phosphorylation on Thr residues is repressed by tyrphostin 9, sphingosine, GW5074 and BML-265. By contrast, the fungal phytotoxin fusicoccin (FC) promotes phosphorylation of Thr-947 independently to BHP, thus leading to large stomatal opening. The plasma membrane H(+) ATPase of plants and fungi generates a proton gradient that drives the active transport of nutrients by H(+)-symport. The resulting external acidification and/or internal alkinization may mediate growth responses. Involved in maintaining the membrane potential and delta-pH, together forming the plasma membrane protonmotive force (PMF) required for root and hypocotyl elongation and root tropism. Important for root growth and development during different nitrogen regimes. Forms a functional cation-translocating unit with CNGC17 that is activated by PSKR1/BAK1 and possibly other BAK1/RLK complexes. Promotes stomatal opening in response to blue light. This chain is ATPase 2, plasma membrane-type, found in Arabidopsis thaliana (Mouse-ear cress).